Consider the following 199-residue polypeptide: Probable molybdenum cofactor guanylyltransferase (199 aa).

Residues 9–11 (LAG), lysine 21, aspartate 69, and aspartate 100 contribute to the GTP site. Aspartate 100 serves as a coordination point for Mg(2+).

This sequence belongs to the MobA family. Mg(2+) is required as a cofactor.

The protein resides in the cytoplasm. It carries out the reaction Mo-molybdopterin + GTP + H(+) = Mo-molybdopterin guanine dinucleotide + diphosphate. Transfers a GMP moiety from GTP to Mo-molybdopterin (Mo-MPT) cofactor (Moco or molybdenum cofactor) to form Mo-molybdopterin guanine dinucleotide (Mo-MGD) cofactor. The polypeptide is Probable molybdenum cofactor guanylyltransferase (Bacillus cytotoxicus (strain DSM 22905 / CIP 110041 / 391-98 / NVH 391-98)).